The sequence spans 892 residues: Alanine--tRNA ligase (892 aa).

Zn(2+)-binding residues include His596, His600, Cys700, and His704.

It belongs to the class-II aminoacyl-tRNA synthetase family. It depends on Zn(2+) as a cofactor.

The protein localises to the cytoplasm. It catalyses the reaction tRNA(Ala) + L-alanine + ATP = L-alanyl-tRNA(Ala) + AMP + diphosphate. Its function is as follows. Catalyzes the attachment of alanine to tRNA(Ala) in a two-step reaction: alanine is first activated by ATP to form Ala-AMP and then transferred to the acceptor end of tRNA(Ala). Also edits incorrectly charged Ser-tRNA(Ala) and Gly-tRNA(Ala) via its editing domain. The protein is Alanine--tRNA ligase of Methanococcus vannielii (strain ATCC 35089 / DSM 1224 / JCM 13029 / OCM 148 / SB).